The primary structure comprises 392 residues: Cell division protein DivIB (392 aa).

Residues 1–87 (MSEKDNNLTP…ETQSSEAPIE (87 aa)) form a disordered region. Residues 1-131 (MSEKDNNLTP…KGSAPLLKKM (131 aa)) lie on the Cytoplasmic side of the membrane. Over residues 14-32 (KHLEYQKRKAEEAKKEKKA) the composition is skewed to basic and acidic residues. The span at 58 to 76 (TRDEAESAELLEEGFETNN) shows a compositional bias: acidic residues. Residues 132-152 (WPALAIVVLVFVGSLYLISPL) traverse the membrane as a helical segment. A POTRA domain is found at 153–224 (SKISTFSVSG…NRFEAIVKEH (72 aa)). The Extracellular segment spans residues 153–392 (SKISTFSVSG…TAQSTTTSSN (240 aa)). The interval 368–392 (ISAQNAKKTDASSENTAQSTTTSSN) is disordered.

Belongs to the FtsQ/DivIB family. DivIB subfamily.

The protein localises to the cell membrane. In terms of biological role, cell division protein that may be involved in stabilizing or promoting the assembly of the division complex. In Lactococcus lactis subsp. lactis (strain IL1403) (Streptococcus lactis), this protein is Cell division protein DivIB.